The chain runs to 340 residues: Citramalyl-CoA lyase, mitochondrial (340 aa).

The transit peptide at 1–22 directs the protein to the mitochondrion; that stretch reads MALRLLRRAARGAAAAALLRLK. Substrate is bound by residues Tyr50, Lys57, and Lys61. Lys57 and Lys61 each carry N6-acetyllysine. N6-acetyllysine; alternate occurs at positions 82 and 92. N6-succinyllysine; alternate is present on residues Lys82 and Lys92. Residue Arg107 coordinates substrate. Mg(2+)-binding residues include Glu171 and Asp206. 272-273 contributes to the substrate binding site; it reads IH. N6-succinyllysine is present on Lys309. Asp320 is a catalytic residue.

Belongs to the HpcH/HpaI aldolase family. Citrate lyase beta subunit-like subfamily. In terms of assembly, homotrimer. Requires Mg(2+) as cofactor.

It is found in the mitochondrion. The catalysed reaction is glyoxylate + acetyl-CoA + H2O = (S)-malate + CoA + H(+). It catalyses the reaction propanoyl-CoA + glyoxylate + H2O = 3-methylmalate + CoA + H(+). It carries out the reaction (3S)-citramalyl-CoA = pyruvate + acetyl-CoA. The enzyme catalyses (S)-malyl-CoA + H2O = (S)-malate + CoA + H(+). In terms of biological role, mitochondrial citramalyl-CoA lyase indirectly involved in the vitamin B12 metabolism. Converts citramalyl-CoA into acetyl-CoA and pyruvate in the C5-dicarboxylate catabolism pathway. The C5-dicarboxylate catabolism pathway is required to detoxify itaconate, a vitamin B12-poisoning metabolite. Also acts as a malate synthase in vitro, converting glyoxylate and acetyl-CoA to malate. Also displays malyl-CoA thioesterase activity. Also acts as a beta-methylmalate synthase in vitro, by mediating conversion of glyoxylate and propionyl-CoA to beta-methylmalate. Also has very weak citramalate synthase activity in vitro. The sequence is that of Citramalyl-CoA lyase, mitochondrial from Homo sapiens (Human).